Here is a 311-residue protein sequence, read N- to C-terminus: Ketoisovalerate oxidoreductase subunit VorB (311 aa).

Heterotetramer of one alpha, one beta, one delta and one gamma chain.

It catalyses the reaction 3-methyl-2-oxobutanoate + 2 oxidized [2Fe-2S]-[ferredoxin] + CoA = 2-methylpropanoyl-CoA + 2 reduced [2Fe-2S]-[ferredoxin] + CO2 + H(+). The protein is Ketoisovalerate oxidoreductase subunit VorB (vorB) of Pyrococcus abyssi (strain GE5 / Orsay).